The chain runs to 108 residues: Insulin-like peptide 17 (108 aa).

An N-terminal signal peptide occupies residues 1 to 19; it reads MFSTRGVLLLLSLMAAVAA.

The protein belongs to the insulin family. Expressed in head neurons and the uterus.

Its subcellular location is the secreted. In terms of biological role, involved in the regulation of the larval diapause. In Caenorhabditis elegans, this protein is Insulin-like peptide 17.